The following is a 129-amino-acid chain: Large ribosomal subunit protein bL19 (129 aa).

The protein belongs to the bacterial ribosomal protein bL19 family.

In terms of biological role, this protein is located at the 30S-50S ribosomal subunit interface and may play a role in the structure and function of the aminoacyl-tRNA binding site. This chain is Large ribosomal subunit protein bL19, found in Granulibacter bethesdensis (strain ATCC BAA-1260 / CGDNIH1).